Reading from the N-terminus, the 508-residue chain is Maturase K (508 aa).

This sequence belongs to the intron maturase 2 family. MatK subfamily.

The protein resides in the plastid. The protein localises to the chloroplast. In terms of biological role, usually encoded in the trnK tRNA gene intron. Probably assists in splicing its own and other chloroplast group II introns. This is Maturase K from Gordonia lasianthus (Loblolly bay).